Reading from the N-terminus, the 279-residue chain is MGLSPGAEGEYALRLPRIPPPLPKPASRTASTGPKDQPPALRRSAVPHSGLNSISPLELEESVGFAALVQLPAKQPPPGTLEQGRSIQQGEKAVVSLETTPSQKADWSSIPKPENEGKLIKQAAEGKPRPRPGDLIEIFRIGYEHWAIYVEDDCVVHLAPPSEEFEVGSITSIFSNRAVVKYSRLEDVLHGCSWKVNNKLDGTYLPLPVDKIIQRTKKMVNKIVQYSLIEGNCEHFVNGLRYGVPRSQQVEHALMEGAKAAGAVISAVVDSIKPKPITA.

2 disordered regions span residues 1 to 53 (MGLS…GLNS) and 70 to 117 (QLPA…ENEG). The segment covering 97 to 106 (LETTPSQKAD) has biased composition (polar residues). The region spanning 135–249 (LIEIFRIGYE…LRYGVPRSQQ (115 aa)) is the LRAT domain. Residues His-145 and His-157 contribute to the active site. Catalysis depends on Cys-233, which acts as the Acyl-thioester intermediate.

The protein belongs to the H-rev107 family. In terms of tissue distribution, highest expression level in testis and pancreas.

It localises to the cytoplasm. Its subcellular location is the cytosol. The enzyme catalyses a 1,2-diacyl-sn-glycero-3-phosphocholine + H2O = a 1-acyl-sn-glycero-3-phosphocholine + a fatty acid + H(+). It carries out the reaction a 1,2-diacyl-sn-glycero-3-phosphocholine + H2O = a 2-acyl-sn-glycero-3-phosphocholine + a fatty acid + H(+). It catalyses the reaction 1-hexadecanoyl-2-(5Z,8Z,11Z,14Z-eicosatetraenoyl)-sn-glycero-3-phosphocholine + 1,2-di-(9Z-octadecenoyl)-sn-glycero-3-phosphoethanolamine = N-(5Z,8Z,11Z,14Z-eicosatetraenoyl)-1,2-di-(9Z-octadecenoyl)-sn-glycero-3-phosphoethanolamine + 1-hexadecanoyl-sn-glycero-3-phosphocholine + H(+). The catalysed reaction is 1,2-di-(9Z-octadecenoyl)-sn-glycero-3-phosphoethanolamine + 1,2-dihexadecanoyl-sn-glycero-3-phosphocholine = N-hexadecanoyl-1,2-di-(9Z-octadecenoyl)-sn-glycero-3-phosphoethanolamine + 1-hexadecanoyl-sn-glycero-3-phosphocholine + H(+). The enzyme catalyses 1,2-di-(9Z-octadecenoyl)-sn-glycero-3-phosphoethanolamine + 1,2-dihexadecanoyl-sn-glycero-3-phosphocholine = N-hexadecanoyl-1,2-di-(9Z-octadecenoyl)-sn-glycero-3-phosphoethanolamine + 2-hexadecanoyl-sn-glycero-3-phosphocholine + H(+). It carries out the reaction a 1,2-diacyl-sn-glycero-3-phosphoethanolamine + a 1,2-diacyl-sn-glycero-3-phosphocholine = an N-acyl-1,2-diacyl-sn-glycero-3-phosphoethanolamine + a 1-acyl-sn-glycero-3-phosphocholine + H(+). It catalyses the reaction a 1,2-diacyl-sn-glycero-3-phosphoethanolamine + a 1,2-diacyl-sn-glycero-3-phosphocholine = an N-acyl-1,2-diacyl-sn-glycero-3-phosphoethanolamine + a 2-acyl-sn-glycero-3-phosphocholine + H(+). The catalysed reaction is 1-hexadecanoyl-2-(9Z-octadecenoyl)-sn-glycero-3-phosphocholine + 1,2-di-(9Z-octadecenoyl)-sn-glycero-3-phosphoethanolamine = N,1,2-tri-(9Z-octadecenoyl)-sn-glycero-3-phosphoethanolamine + 1-hexadecanoyl-sn-glycero-3-phosphocholine + H(+). In terms of biological role, exhibits both phospholipase A1/2 and acyltransferase activities. Shows phospholipase A1 (PLA1) and A2 (PLA2) activity, catalyzing the calcium-independent release of fatty acids from the sn-1 or sn-2 position of glycerophospholipids. Shows N-acyltransferase activity, catalyzing the calcium-independent transfer of a fatty acyl group at the sn-1 position of phosphatidylcholine (PC) and other glycerophospholipids to the primary amine of phosphatidylethanolamine (PE), forming N-acylphosphatidylethanolamine (NAPE), which serves as precursor for N-acylethanolamines (NAEs). This chain is Phospholipase A and acyltransferase 5, found in Homo sapiens (Human).